The following is a 421-amino-acid chain: 4-hydroxy-3-methylbut-2-en-1-yl diphosphate synthase (flavodoxin) (421 aa).

Cys-311, Cys-314, Cys-357, and Glu-364 together coordinate [4Fe-4S] cluster.

This sequence belongs to the IspG family. The cofactor is [4Fe-4S] cluster.

It catalyses the reaction (2E)-4-hydroxy-3-methylbut-2-enyl diphosphate + oxidized [flavodoxin] + H2O + 2 H(+) = 2-C-methyl-D-erythritol 2,4-cyclic diphosphate + reduced [flavodoxin]. It functions in the pathway isoprenoid biosynthesis; isopentenyl diphosphate biosynthesis via DXP pathway; isopentenyl diphosphate from 1-deoxy-D-xylulose 5-phosphate: step 5/6. Functionally, converts 2C-methyl-D-erythritol 2,4-cyclodiphosphate (ME-2,4cPP) into 1-hydroxy-2-methyl-2-(E)-butenyl 4-diphosphate. This chain is 4-hydroxy-3-methylbut-2-en-1-yl diphosphate synthase (flavodoxin), found in Stenotrophomonas maltophilia (strain K279a).